The following is a 489-amino-acid chain: Beta-dihydromenaquinone-9 omega-hydroxylase (489 aa).

Cys435 contacts heme.

It belongs to the cytochrome P450 family. Heme serves as cofactor.

It localises to the cytoplasm. It carries out the reaction beta-dihydromenaquinone-9 + 2 reduced [2Fe-2S]-[ferredoxin] + O2 + 2 H(+) = omega-hydroxy-beta-dihydromenaquinone-9 + 2 oxidized [2Fe-2S]-[ferredoxin] + H2O. In terms of biological role, involved in the biosynthesis of sulfomenaquinone (SMK, initially named S881 on the basis of its mass), which is localized in the outer envelope of M.bovis and negatively regulates its virulence. Catalyzes the hydroxylation of beta-dihydromenaquinone-9, leading to the formation of omega-hydroxy-beta-dihydromenaquinone-9. This chain is Beta-dihydromenaquinone-9 omega-hydroxylase (cyp128), found in Mycobacterium bovis (strain ATCC BAA-935 / AF2122/97).